The following is a 205-amino-acid chain: Probable GTP-binding protein EngB (205 aa).

The region spanning 22–198 (HLPEYAFIGR…LSYIDEVNQD (177 aa)) is the EngB-type G domain. Residues 30–37 (GRSNVGKS), 57–61 (GKTQL), 75–78 (DLPG), 142–145 (TKAD), and 177–179 (TSA) each bind GTP. Residues Ser-37 and Thr-59 each contribute to the Mg(2+) site.

The protein belongs to the TRAFAC class TrmE-Era-EngA-EngB-Septin-like GTPase superfamily. EngB GTPase family. Requires Mg(2+) as cofactor.

Its function is as follows. Necessary for normal cell division and for the maintenance of normal septation. The polypeptide is Probable GTP-binding protein EngB (Flavobacterium psychrophilum (strain ATCC 49511 / DSM 21280 / CIP 103535 / JIP02/86)).